A 493-amino-acid polypeptide reads, in one-letter code: Inosine-5'-monophosphate dehydrogenase (493 aa).

CBS domains are found at residues 97 to 155 and 159 to 219; these read VIID…NAPI and MTSE…AKDE. NAD(+)-binding positions include Asp-253 and 303–305; that span reads GIG. Residues Gly-305 and Gly-307 each contribute to the K(+) site. Residue Ser-308 participates in IMP binding. Position 310 (Cys-310) interacts with K(+). Cys-310 (thioimidate intermediate) is an active-site residue. Residues 343-345, 366-367, and 390-394 contribute to the IMP site; these read DGG, GS, and YRGMG. Residue Arg-406 is the Proton acceptor of the active site. Glu-421 provides a ligand contact to IMP. K(+) is bound by residues Glu-475, Ser-476, and His-477.

Belongs to the IMPDH/GMPR family. In terms of assembly, homotetramer. K(+) is required as a cofactor.

The catalysed reaction is IMP + NAD(+) + H2O = XMP + NADH + H(+). The protein operates within purine metabolism; XMP biosynthesis via de novo pathway; XMP from IMP: step 1/1. Its activity is regulated as follows. Mycophenolic acid (MPA) is a non-competitive inhibitor that prevents formation of the closed enzyme conformation by binding to the same site as the amobile flap. In contrast, mizoribine monophosphate (MZP) is a competitive inhibitor that induces the closed conformation. MPA is a potent inhibitor of mammalian IMPDHs but a poor inhibitor of the bacterial enzymes. MZP is a more potent inhibitor of bacterial IMPDH. Catalyzes the conversion of inosine 5'-phosphate (IMP) to xanthosine 5'-phosphate (XMP), the first committed and rate-limiting step in the de novo synthesis of guanine nucleotides, and therefore plays an important role in the regulation of cell growth. In Streptococcus pyogenes serotype M1, this protein is Inosine-5'-monophosphate dehydrogenase.